Reading from the N-terminus, the 809-residue chain is Zygotic DNA replication licensing factor mcm3 (809 aa).

An MCM domain is found at 297–504 (IFEQLSRSLA…QDREISDHVL (208 aa)). ATP is bound at residue 347–354 (GDPSVAKS). The short motif at 479–482 (SRFD) is the Arginine finger element. Residues 664–741 (KKRRRRDEDS…TDSSAKPGLS (78 aa)) are disordered. Residues 696–705 (AQEGESHDPY) show a composition bias toward basic and acidic residues.

This sequence belongs to the MCM family. As to quaternary structure, component of the mcm2-7 complex (RLF-M). The complex forms a toroidal hexameric ring with the proposed subunit order mcm2-mcm6-mcm4-mcm7-mcm3-mcm5. Component of the CMG helicase complex, composed of the mcm2-7 complex, the GINS complex and cdc45.

Its subcellular location is the nucleus. It localises to the chromosome. It carries out the reaction ATP + H2O = ADP + phosphate + H(+). In terms of biological role, acts as a component of the MCM2-7 complex (MCM complex) which is the putative replicative helicase essential for 'once per cell cycle' DNA replication initiation and elongation in eukaryotic cells. The active ATPase sites in the MCM2-7 ring are formed through the interaction surfaces of two neighboring subunits such that a critical structure of a conserved arginine finger motif is provided in trans relative to the ATP-binding site of the Walker A box of the adjacent subunit. The six ATPase active sites, however, are likely to contribute differentially to the complex helicase activity. The existence of maternal and zygotic forms of mcm3 and mcm6 suggests that specific forms of mcm2-7 complexes may be used during different stages of development. The chain is Zygotic DNA replication licensing factor mcm3 (zmcm3) from Xenopus tropicalis (Western clawed frog).